Consider the following 72-residue polypeptide: Large ribosomal subunit protein bL31c (72 aa).

It belongs to the bacterial ribosomal protein bL31 family. Type A subfamily. In terms of assembly, part of the 50S ribosomal subunit.

It localises to the plastid. Its subcellular location is the chloroplast. Its function is as follows. Binds the 23S rRNA. The protein is Large ribosomal subunit protein bL31c of Guillardia theta (Cryptophyte).